The chain runs to 71 residues: Beta-defensin 2 (71 aa).

A signal peptide spans 1-20; the sequence is MRTLCSLLLICCLLFSYTTP. 3 disulfides stabilise this stretch: cysteine 37–cysteine 66, cysteine 44–cysteine 59, and cysteine 49–cysteine 67.

This sequence belongs to the beta-defensin family. As to expression, kidney, uterus and to a lesser extent in heart.

Its subcellular location is the secreted. Its function is as follows. Has bactericidal activity. The polypeptide is Beta-defensin 2 (Defb2) (Mus musculus (Mouse)).